We begin with the raw amino-acid sequence, 450 residues long: Phosphoglucosamine mutase (450 aa).

Serine 102 serves as the catalytic Phosphoserine intermediate. Mg(2+) is bound by residues serine 102, aspartate 243, aspartate 245, and aspartate 247. Serine 102 is subject to Phosphoserine.

Belongs to the phosphohexose mutase family. The cofactor is Mg(2+). Activated by phosphorylation.

It catalyses the reaction alpha-D-glucosamine 1-phosphate = D-glucosamine 6-phosphate. Functionally, catalyzes the conversion of glucosamine-6-phosphate to glucosamine-1-phosphate. This Rhizobium rhizogenes (strain K84 / ATCC BAA-868) (Agrobacterium radiobacter) protein is Phosphoglucosamine mutase.